We begin with the raw amino-acid sequence, 1002 residues long: MAELPVTELPGDALCSGRFTISTLMGGDEPPPAACDSSQPSHLTHGSTLYMRTFGYNTIDVVPAYEHYANSALPGEPRKVRPTLADLHSFLKQEGSHLHALAFDGRQGRELTDGLVEDETGTNSEKSPGEPVRFGWVKGVMIRCMLNIWGVILYLRLPWITAQAGIVLTWLIILLSVMVTSITGLSISAISTNGKVKSGGTYFLISRSLGPELGGSIGLIFAFANAVGVAMHTVGFAETVRDLLQEYGTPIVDPINDIRIIGVVTVTVLLAISLAGMEWESKAQVLFFLVIMVSFANYLVGTLIPASEDKASKGFYSYHGDIFVQNLVPDWRGIDGSFFGMFSIFFPSATGILAGANISGDLKDPAVAIPKGTLMAIFWTTISYLAISATIGSCVVRDASGDVNDTMTPGPGPCEGLACGYGWNFTECSQQRSCRYGLINYYQTMSMVSAFAPLITAGIFGATLSSALACLVSAAKVFQCLCEDQLYPLIGFFGKGYGKNREPVRGYLLAYAIAVAFIIIAELNTIAPIISNFFLCSYALINFSCFHASITNSPGWRPSFRYYSKWAALFGAVISVVIMFLLTWWAALIAIGVVLFLLLYVIYKKPEVNWGSSVQAGSYNLALSYSVGLNEVEDHIKNYRPQCLVLTGPPNFRPALVDFVSTFTQNLSLMICGHVLIGPGKQRVPELRLIASGHTKWLNKRKIKAFYSDVIAEDLRSGVQILMQASGLGRMKPNILVVGFKRNWQSAHPATVEDYIGVLHDAFDFNYGVCVMRMREGLNVSEALQTHTTPEALIQEEQASTIFQSEQGKKTIDIYWLFDDGGLTLLIPYLLHRKKRWGKCKIRVFVGGQINRMDEERKAIISLLSKFRLGFHEVHVLPDINQKPQAEHTKRFEDMIAPFRLNDGFKDEATVTEMRRDCPWKISDEEINKNRIKSLRQVRLSEILLDYSRDAALIILTLPIGRKGKCPSSLYMAWLETLSQDLRPPVLLIRGNQENVLTFYCQ.

The Cytoplasmic portion of the chain corresponds to 1–135; it reads MAELPVTELP…KSPGEPVRFG (135 aa). At Ser-41 the chain carries Phosphoserine. Thr-44 is subject to Phosphothreonine. Ser-47 carries the phosphoserine modification. Thr-48, Thr-53, and Thr-58 each carry phosphothreonine. A phosphoserine mark is found at Ser-71 and Ser-89. A Phosphothreonine modification is found at Thr-122. At Ser-124 the chain carries Phosphoserine. A discontinuously helical membrane pass occupies residues 136-165; sequence WVKGVMIRCMLNIWGVILYLRLPWITAQAG. Na(+) is bound by residues Leu-146 and Trp-149. Residues 166–187 form a helical membrane-spanning segment; the sequence is IVLTWLIILLSVMVTSITGLSI. Residues 188–218 are Cytoplasmic-facing; that stretch reads SAISTNGKVKSGGTYFLISRSLGPELGGSIG. A helical membrane pass occupies residues 219–241; sequence LIFAFANAVGVAMHTVGFAETVR. Over 242 to 253 the chain is Extracellular; the sequence is DLLQEYGTPIVD. A run of 2 helical transmembrane segments spans residues 254–278 and 279–301; these read PIND…AGME and WESK…YLVG. The Extracellular segment spans residues 302-336; the sequence is TLIPASEDKASKGFYSYHGDIFVQNLVPDWRGIDG. Residues 337–358 form a discontinuously helical membrane-spanning segment; sequence SFFGMFSIFFPSATGILAGANI. Positions 351, 352, and 353 each coordinate chloride. At 359–369 the chain is on the cytoplasmic side; that stretch reads SGDLKDPAVAI. A helical membrane pass occupies residues 370 to 391; the sequence is PKGTLMAIFWTTISYLAISATI. Over 392–451 the chain is Extracellular; that stretch reads GSCVVRDASGDVNDTMTPGPGPCEGLACGYGWNFTECSQQRSCRYGLINYYQTMSMVSAF. Asn-404 carries N-linked (GlcNAc...) asparagine glycosylation. Residues Cys-414 and Cys-419 are joined by a disulfide bond. The N-linked (GlcNAc...) asparagine glycan is linked to Asn-424. Residues Cys-428 and Cys-434 are joined by a disulfide bond. The helical transmembrane segment at 452-475 threads the bilayer; that stretch reads APLITAGIFGATLSSALACLVSAA. Na(+) contacts are provided by Ala-462, Ser-465, and Ser-466. The Cytoplasmic portion of the chain corresponds to 476 to 505; it reads KVFQCLCEDQLYPLIGFFGKGYGKNREPVR. The chain crosses the membrane as a helical span at residues 506 to 520; that stretch reads GYLLAYAIAVAFIII. The Extracellular segment spans residues 521–525; the sequence is AELNT. The chain crosses the membrane as a helical span at residues 526–542; sequence IAPIISNFFLCSYALIN. Position 538 (Tyr-538) interacts with chloride. Residues 543-565 lie on the Cytoplasmic side of the membrane; sequence FSCFHASITNSPGWRPSFRYYSK. The next 2 helical transmembrane spans lie at 566 to 585 and 586 to 597; these read WAAL…LTWW and AALIAIGVVLFL. The Cytoplasmic segment spans residues 598-1002; sequence LLYVIYKKPE…QENVLTFYCQ (405 aa). A scissor helix region spans residues 613 to 628; that stretch reads SVQAGSYNLALSYSVG. Residues Leu-646, Arg-653, Val-675, Gly-739, Leu-778, and Asn-779 each coordinate ATP.

This sequence belongs to the SLC12A transporter family. As to quaternary structure, homodimer; adopts a domain-swap conformation at the scissor helices connecting the transmembrane domain and C-terminal domain. Interacts with KLHL3. Interacts with IL18R1; this interaction is increased by IL18 treatment. Ubiquitinated; ubiquitination is essential for regulation of endocytosis. Post-translationally, phosphorylated at Thr-53, Thr-58 and Ser-71 by OXSR1/OSR1 and STK39/SPAK downstream of WNK4, promoting its activity. Phosphorylated in response to IL18. As to expression, expressed predominantly in kidney, including in distal tubules (at protein level). Detected at low levels in heart, lung and liver. Not detected in normal aorta, but abundantly expressed in fatty streaks and advanced atherosclerotic lesions. In atherosclerotic lesions, expressed in macrophages, smooth muscle cells and endothelial cells (at protein level).

The protein localises to the cell membrane. The protein resides in the apical cell membrane. The catalysed reaction is chloride(out) + Na(+)(out) = chloride(in) + Na(+)(in). With respect to regulation, phosphorylation by OXSR1/OSR1 and STK39/SPAK in kidney distal convoluted tubules promotes its activity. Also activated by OXSR1/OSR1 and STK39/SPAK downstream of WNK3. Inhibited by thiazide-type diuretic metolazone. Thiazide drugs, such as polythiazide, specifically inhibit SLC12A3/NCC transporter activity by competing with chloride for binding. Functionally, electroneutral sodium and chloride ion cotransporter, which acts as a key mediator of sodium and chloride reabsorption in kidney distal convoluted tubules. Also acts as a receptor for the pro-inflammatory cytokine IL18, thereby contributing to IL18-induced cytokine production, including IFNG, IL6, IL18 and CCL2. May act either independently of IL18R1, or in a complex with IL18R1. This Mus musculus (Mouse) protein is Solute carrier family 12 member 3.